We begin with the raw amino-acid sequence, 537 residues long: ATP-dependent 6-phosphofructokinase 5, chloroplastic (537 aa).

The transit peptide at 1-52 (MDALSQAISSGISVPYKNNSSSLVPSHGLTSLILRKSRSPVNPSSRSRVSVR) directs the protein to the chloroplast. The segment at 35–64 (RKSRSPVNPSSRSRVSVRASEIQHSKTSAS) is disordered. Low complexity predominate over residues 39–54 (SPVNPSSRSRVSVRAS). Ser-147 is subject to Phosphoserine. ATP contacts are provided by residues Gly-189, 253-254 (RG), and 278-281 (GNGT). Position 279 (Asn-279) interacts with Mg(2+). Substrate is bound by residues 307–309 (TID), 352–354 (MGR), Glu-408, and 460–463 (YMIR). Asp-309 functions as the Proton acceptor in the catalytic mechanism.

The protein belongs to the phosphofructokinase type A (PFKA) family. PPi-dependent PFK group II subfamily. Atypical ATP-dependent clade 'X' sub-subfamily. Homotetramer. Requires Mg(2+) as cofactor. In terms of tissue distribution, expressed in roots, leaves, stems and flowers.

It localises to the plastid. The protein localises to the chloroplast. It catalyses the reaction beta-D-fructose 6-phosphate + ATP = beta-D-fructose 1,6-bisphosphate + ADP + H(+). The protein operates within carbohydrate degradation; glycolysis; D-glyceraldehyde 3-phosphate and glycerone phosphate from D-glucose: step 3/4. With respect to regulation, allosterically activated by AMP. Its function is as follows. Catalyzes the phosphorylation of D-fructose 6-phosphate to fructose 1,6-bisphosphate by ATP, the first committing step of glycolysis. The chain is ATP-dependent 6-phosphofructokinase 5, chloroplastic from Arabidopsis thaliana (Mouse-ear cress).